A 500-amino-acid polypeptide reads, in one-letter code: Na(+)/H(+) antiporter NhaB (500 aa).

12 helical membrane-spanning segments follow: residues 28 to 50 (FLLL…VLVG), 68 to 88 (GGLL…ALYA), 98 to 118 (LLLM…LLLF), 121 to 141 (LLLG…LAAL), 145 to 165 (FLDA…FFAV), 205 to 225 (LLMH…VGEP), 244 to 264 (QVAP…VLLE), 311 to 331 (VLIV…LLVI), 350 to 370 (FQEA…VAVI), 394 to 414 (MLFI…VATI), 449 to 469 (VATP…IAPL), and 477 to 497 (MVWM…WAVS).

Belongs to the NhaB Na(+)/H(+) (TC 2.A.34) antiporter family.

The protein resides in the cell inner membrane. It catalyses the reaction 2 Na(+)(in) + 3 H(+)(out) = 2 Na(+)(out) + 3 H(+)(in). Its function is as follows. Na(+)/H(+) antiporter that extrudes sodium in exchange for external protons. The protein is Na(+)/H(+) antiporter NhaB of Pseudomonas aeruginosa (strain UCBPP-PA14).